A 432-amino-acid polypeptide reads, in one-letter code: Adenylosuccinate synthetase (432 aa).

GTP-binding positions include 13–19 (GDEGKGK) and 41–43 (GHT). Catalysis depends on D14, which acts as the Proton acceptor. 2 residues coordinate Mg(2+): D14 and G41. IMP contacts are provided by residues 14–17 (DEGK), 39–42 (NAGH), T130, R144, Q225, T240, and R304. H42 serves as the catalytic Proton donor. Position 300–306 (300–306 (ATTGRRR)) interacts with substrate. GTP contacts are provided by residues R306, 332 to 334 (KLD), and 415 to 417 (STG).

Belongs to the adenylosuccinate synthetase family. In terms of assembly, homodimer. The cofactor is Mg(2+).

It localises to the cytoplasm. It carries out the reaction IMP + L-aspartate + GTP = N(6)-(1,2-dicarboxyethyl)-AMP + GDP + phosphate + 2 H(+). It functions in the pathway purine metabolism; AMP biosynthesis via de novo pathway; AMP from IMP: step 1/2. In terms of biological role, plays an important role in the de novo pathway of purine nucleotide biosynthesis. Catalyzes the first committed step in the biosynthesis of AMP from IMP. The sequence is that of Adenylosuccinate synthetase from Salmonella agona (strain SL483).